The chain runs to 271 residues: Pyrroline-5-carboxylate reductase (271 aa).

It belongs to the pyrroline-5-carboxylate reductase family.

The protein resides in the cytoplasm. It carries out the reaction L-proline + NADP(+) = (S)-1-pyrroline-5-carboxylate + NADPH + 2 H(+). It catalyses the reaction L-proline + NAD(+) = (S)-1-pyrroline-5-carboxylate + NADH + 2 H(+). It functions in the pathway amino-acid biosynthesis; L-proline biosynthesis; L-proline from L-glutamate 5-semialdehyde: step 1/1. Catalyzes the reduction of 1-pyrroline-5-carboxylate (PCA) to L-proline. The sequence is that of Pyrroline-5-carboxylate reductase from Staphylococcus saprophyticus subsp. saprophyticus (strain ATCC 15305 / DSM 20229 / NCIMB 8711 / NCTC 7292 / S-41).